A 177-amino-acid polypeptide reads, in one-letter code: UPF0340 protein STH78 (177 aa).

It belongs to the UPF0340 family.

The polypeptide is UPF0340 protein STH78 (Symbiobacterium thermophilum (strain DSM 24528 / JCM 14929 / IAM 14863 / T)).